Here is a 135-residue protein sequence, read N- to C-terminus: Protein Wnt-7c (135 aa).

2 cysteine pairs are disulfide-bonded: Cys-3–Cys-17 and Cys-5–Cys-12. The O-palmitoleoyl serine; by PORCN moiety is linked to residue Ser-9. N-linked (GlcNAc...) asparagine glycans are attached at residues Asn-62, Asn-85, and Asn-98. 3 cysteine pairs are disulfide-bonded: Cys-81/Cys-112, Cys-97/Cys-107, and Cys-134/Cys-135.

The protein belongs to the Wnt family. In terms of processing, palmitoleoylation is required for efficient binding to frizzled receptors. Depalmitoleoylation leads to Wnt signaling pathway inhibition.

It is found in the secreted. The protein localises to the extracellular space. It localises to the extracellular matrix. In terms of biological role, ligand for members of the frizzled family of seven transmembrane receptors. Probable developmental protein. May be a signaling molecule which affects the development of discrete regions of tissues. Is likely to signal over only few cell diameters. This chain is Protein Wnt-7c (wnt7c), found in Xenopus laevis (African clawed frog).